Reading from the N-terminus, the 402-residue chain is p-cumate 2,3-dioxygenase system, ferredoxin--NAD(+) reductase component (402 aa).

FAD contacts are provided by Ala16, Lys51, Val83, Arg131, and Asp275.

This sequence belongs to the FAD-dependent oxidoreductase family. As to quaternary structure, the p-cumate 2,3-dioxygenase multicomponent enzyme system is composed of an electron transfer component and a dioxygenase component (iron sulfur protein (ISP)). The electron transfer component is composed of a ferredoxin reductase (CmtAa) and a ferredoxin (CmtAd), and the dioxygenase component is formed of a large alpha subunit (CmtAb) and a small beta subunit (CmtAc). The cofactor is FAD.

It catalyses the reaction 2 reduced [2Fe-2S]-[ferredoxin] + NAD(+) + H(+) = 2 oxidized [2Fe-2S]-[ferredoxin] + NADH. It functions in the pathway aromatic compound metabolism; p-cumate degradation; acetaldehyde and pyruvate from p-cumate. Component of the p-cumate 2,3-dioxygenase multicomponent enzyme system which catalyzes the incorporation of both atoms of molecular oxygen into p-cumate to form cis-2,3-dihydroxy-2,3-dihydro-p-cumate. Ferredoxin reductase catalyzes the transfer of electrons from NADH to ferredoxin (CmtAd). This Pseudomonas putida (Arthrobacter siderocapsulatus) protein is p-cumate 2,3-dioxygenase system, ferredoxin--NAD(+) reductase component.